A 210-amino-acid chain; its full sequence is Keratin-associated protein 4-9 (210 aa).

28 tandem repeats follow at residues 24-28, 29-33, 34-38, 39-43, 44-48, 49-53, 54-58, 59-63, 69-73, 74-78, 84-88, 89-93, 94-98, 99-103, 104-108, 109-113, 114-118, 119-123, 124-128, 129-133, 134-138, 139-143, 144-148, 149-153, 159-163, 164-168, 169-173, and 174-178. A 29 X 5 AA repeats of C-C-[RQVHIEK]-[SPTR]-[VSTQCRNP] region spans residues 24–178; it reads CCRPSCCETT…CCRPCCCVRP (155 aa).

Belongs to the KRTAP type 4 family. Interacts with hair keratins. As to expression, expressed in the hair follicles.

In terms of biological role, in the hair cortex, hair keratin intermediate filaments are embedded in an interfilamentous matrix, consisting of hair keratin-associated proteins (KRTAP), which are essential for the formation of a rigid and resistant hair shaft through their extensive disulfide bond cross-linking with abundant cysteine residues of hair keratins. The matrix proteins include the high-sulfur and high-glycine-tyrosine keratins. This is Keratin-associated protein 4-9 (KRTAP4-9) from Homo sapiens (Human).